Here is a 458-residue protein sequence, read N- to C-terminus: ATP synthase subunit beta (458 aa).

Residue 148–155 participates in ATP binding; sequence GGAGVGKT.

It belongs to the ATPase alpha/beta chains family. As to quaternary structure, F-type ATPases have 2 components, CF(1) - the catalytic core - and CF(0) - the membrane proton channel. CF(1) has five subunits: alpha(3), beta(3), gamma(1), delta(1), epsilon(1). CF(0) has three main subunits: a(1), b(2) and c(9-12). The alpha and beta chains form an alternating ring which encloses part of the gamma chain. CF(1) is attached to CF(0) by a central stalk formed by the gamma and epsilon chains, while a peripheral stalk is formed by the delta and b chains.

It is found in the cell inner membrane. The enzyme catalyses ATP + H2O + 4 H(+)(in) = ADP + phosphate + 5 H(+)(out). Functionally, produces ATP from ADP in the presence of a proton gradient across the membrane. The catalytic sites are hosted primarily by the beta subunits. This chain is ATP synthase subunit beta, found in Mannheimia succiniciproducens (strain KCTC 0769BP / MBEL55E).